A 153-amino-acid polypeptide reads, in one-letter code: Putative nuclear shuttle protein (153 aa).

It belongs to the nanoviridae nuclear shuttle protein family.

It localises to the host nucleus. The protein localises to the host cytoplasm. In terms of biological role, putative nuclear shuttle protein. This chain is Putative nuclear shuttle protein (DNA-N), found in Astragalus sinicus (Chinese milk vetch).